Consider the following 929-residue polypeptide: Ras guanine nucleotide exchange factor M (929 aa).

A compositionally biased stretch (polar residues) spans 1–15 (MWQKPSLTKSMMNEV). 2 disordered regions span residues 1–102 (MWQK…AAGS) and 169–316 (TNNN…SKSL). Low complexity predominate over residues 16-33 (SSNSPKSPTLTSSPSTQS). Residues 44-67 (LDGGGGGSNRLIFGGSGGGSGGGS) are compositionally biased toward gly residues. Composition is skewed to low complexity over residues 68-80 (LPSS…VNPF) and 169-191 (TNNN…NNDG). Positions 192–202 (SGSGSGAGGSF) are enriched in gly residues. Low complexity predominate over residues 203-246 (IGTTTSAKTTSTTSTSAATTTTTTTTSSSSSSPSSSSPSSTSPT). Residues 247 to 256 (IASNNDNNNK) are compositionally biased toward polar residues. Low complexity predominate over residues 270–287 (PPLTLSQSQTQQQQQQKV). A compositionally biased stretch (polar residues) spans 295-305 (RFSTNSSGSQS). Residues 390-528 (NKFVVVSGPK…PILDLYEKLK (139 aa)) form the N-terminal Ras-GEF domain. A disordered region spans residues 540-583 (SLSGSGGISNNNNGSDLKNSNNGNNSSNNNNSSSNSSSSSSSSD). The region spanning 676-911 (SPQDIAKQLT…YAFSKFIESP (236 aa)) is the Ras-GEF domain.

Its function is as follows. Promotes the exchange of Ras-bound GDP by GTP. The sequence is that of Ras guanine nucleotide exchange factor M (gefM) from Dictyostelium discoideum (Social amoeba).